Consider the following 659-residue polypeptide: Tetratricopeptide repeat protein 30 homolog (659 aa).

7 TPR repeats span residues 3–36 (SQNM…LNGI), 43–76 (RAGL…VPDV), 143–176 (ATVK…GGFN), 178–210 (HIAY…GIRN), 391–424 (CRSA…RAWI), 450–483 (TWRL…NYDD), and 533–566 (CIVN…GSGA).

This sequence belongs to the TTC30/dfy-1/fleer family.

It localises to the cell projection. It is found in the cilium. Functionally, required for polyglutamylation of axonemal tubulin in sensory cilia. Plays a role in anterograde intraflagellar transport (IFT), the process by which cilia precursors are transported from the base of the cilium to the site of their incorporation at the tip. The sequence is that of Tetratricopeptide repeat protein 30 homolog from Aedes aegypti (Yellowfever mosquito).